The following is a 431-amino-acid chain: Histidinol dehydrogenase (431 aa).

NAD(+) is bound by residues Tyr-130, Gln-191, and Asn-214. Residues Ser-237, Gln-261, and His-264 each coordinate substrate. Residues Gln-261 and His-264 each coordinate Zn(2+). Residues Glu-329 and His-330 each act as proton acceptor in the active site. Substrate contacts are provided by His-330, Asp-363, Glu-417, and His-422. Asp-363 contacts Zn(2+). Zn(2+) is bound at residue His-422.

Belongs to the histidinol dehydrogenase family. Zn(2+) serves as cofactor.

It catalyses the reaction L-histidinol + 2 NAD(+) + H2O = L-histidine + 2 NADH + 3 H(+). Its pathway is amino-acid biosynthesis; L-histidine biosynthesis; L-histidine from 5-phospho-alpha-D-ribose 1-diphosphate: step 9/9. In terms of biological role, catalyzes the sequential NAD-dependent oxidations of L-histidinol to L-histidinaldehyde and then to L-histidine. The polypeptide is Histidinol dehydrogenase (Psychrobacter arcticus (strain DSM 17307 / VKM B-2377 / 273-4)).